A 509-amino-acid chain; its full sequence is Photosystem II CP47 reaction center protein (509 aa).

Transmembrane regions (helical) follow at residues alanine 21–serine 36, isoleucine 101–tryptophan 115, glycine 140–phenylalanine 156, isoleucine 203–threonine 218, valine 237–threonine 252, and asparagine 457–arginine 472.

The protein belongs to the PsbB/PsbC family. PsbB subfamily. As to quaternary structure, PSII is composed of 1 copy each of membrane proteins PsbA, PsbB, PsbC, PsbD, PsbE, PsbF, PsbH, PsbI, PsbJ, PsbK, PsbL, PsbM, PsbT, PsbX, PsbY, PsbZ, Psb30/Ycf12, at least 3 peripheral proteins of the oxygen-evolving complex and a large number of cofactors. It forms dimeric complexes. It depends on Binds multiple chlorophylls. PSII binds additional chlorophylls, carotenoids and specific lipids. as a cofactor.

It is found in the plastid. Its subcellular location is the chloroplast thylakoid membrane. One of the components of the core complex of photosystem II (PSII). It binds chlorophyll and helps catalyze the primary light-induced photochemical processes of PSII. PSII is a light-driven water:plastoquinone oxidoreductase, using light energy to abstract electrons from H(2)O, generating O(2) and a proton gradient subsequently used for ATP formation. This Porphyra purpurea (Red seaweed) protein is Photosystem II CP47 reaction center protein.